A 212-amino-acid polypeptide reads, in one-letter code: Ropporin-1 (212 aa).

An RIIa domain is found at 12-43 (PELPELLKQFTKAAIRTQPPDLIQWAAEYFGA). Ser56 bears the Phosphoserine mark. Residues 209–212 (VRLE) form an interaction with RHPN1 region.

Belongs to the ropporin family. In terms of assembly, homodimer. Interacts with AKAP3. May interact with SPA17. Interacts with RHPN1. Interacts with FSCB; the interaction increases upon spermatozoa capacitation conditions. Interacts with CFAP61. Post-translationally, sumoylated, sumoylation decreases upon spermatozoa capacitation conditions.

The protein localises to the cell projection. The protein resides in the cilium. Its subcellular location is the flagellum. In terms of biological role, important for male fertility. With ROPN1L, involved in fibrous sheath integrity and sperm motility, plays a role in PKA-dependent signaling processes required for spermatozoa capacitation. This chain is Ropporin-1 (Ropn1), found in Rattus norvegicus (Rat).